A 343-amino-acid chain; its full sequence is RNA-binding protein 43 (343 aa).

Residues 15–90 (RTVVVSGLPV…PRLTVSHFSE (76 aa)) enclose the RRM domain.

The chain is RNA-binding protein 43 (Rbm43) from Mus musculus (Mouse).